Reading from the N-terminus, the 831-residue chain is Pleckstrin homology-like domain family B member 1 (831 aa).

Residues 1-11 are compositionally biased toward basic residues; that stretch reads LTLGARGRRTR. The tract at residues 1 to 73 is disordered; that stretch reads LTLGARGRRT…PIPRERKNSI (73 aa). The residue at position 6 (Arg-6) is an Omega-N-methylarginine. 2 positions are modified to phosphoserine: Ser-12 and Ser-14. Phosphothreonine is present on Thr-16. Ser-27, Ser-33, Ser-45, Ser-49, Ser-57, Ser-72, Ser-77, and Ser-175 each carry phosphoserine. Positions 39–51 are enriched in polar residues; sequence GSLTGASPRQSPH. Disordered regions lie at residues 160–209 and 416–465; these read RSGE…LQGE and NGDM…QNGT. Residues 174–188 are compositionally biased toward basic and acidic residues; sequence ESMERSDEENLKEEC. Residues 180-306 adopt a coiled-coil conformation; sequence DEENLKEECS…TETKLFEDLE (127 aa). Ser-421 and Ser-467 each carry phosphoserine. The span at 421-442 shows a compositional bias: low complexity; that stretch reads SPLPRTRSGPLPSSSGSSSSSS. The segment at 584-603 is disordered; sequence SMETSISTGGNSACSPDNMS. Positions 610–676 form a coiled coil; the sequence is MGKIEEMEKM…QQLVEKEVKL (67 aa). The region spanning 721 to 824 is the PH domain; the sequence is SKVCRGYLIK…WMDVIVTGAE (104 aa).

The chain is Pleckstrin homology-like domain family B member 1 (Phldb1) from Rattus norvegicus (Rat).